Here is a 264-residue protein sequence, read N- to C-terminus: Agamous-like MADS-box protein AGL61 (264 aa).

The MADS-box domain occupies 62–122; sequence IGRQKIPMVK…KKPFSFGHPS (61 aa).

Interacts with PHE1/AGL37, PHE2/AGL38, AGL80 and AGL86. Forms a heterodimer with AGL80. In terms of tissue distribution, expressed exclusively in the central cell of the female gametophyte and in early endosperm.

It localises to the nucleus. In terms of biological role, probable transcription factor. Controls central cell differentiation during female gametophyte development. The polypeptide is Agamous-like MADS-box protein AGL61 (AGL61) (Arabidopsis thaliana (Mouse-ear cress)).